We begin with the raw amino-acid sequence, 996 residues long: Receptor-like protein kinase HSL1 (996 aa).

The first 15 residues, 1 to 15 (MYLLFLFLLFPTVFS), serve as a signal peptide directing secretion. The Extracellular portion of the chain corresponds to 16-618 (LNQDGFILQQ…ENEAKKRGYV (603 aa)). LRR repeat units lie at residues 59-83 (FSSV…ICRL), 84-107 (SNLA…IAAC), 109-131 (SLQT…LADI), 133-154 (TLVH…SFGK), 155-178 (FENL…FLGN), 179-203 (ISTL…EFGN), 205-228 (TNLE…LGQL), 229-252 (SKLV…LGGL), 253-276 (TNVV…LGNL), 278-299 (SLRL…ELCR), 300-323 (VPLE…IALS), 325-347 (NLYE…LGLN), 348-371 (SPLR…LCAK), 373-395 (ELEE…LADC), 396-419 (RSLT…FWGL), 421-443 (HVNL…IGGA), 444-467 (SNLS…IGSL), 468-491 (DNLN…LMSL), 493-515 (ELGT…IKSW), 516-539 (KKLN…IGSL), 541-562 (VLNY…SLQS), and 563-586 (LKLN…LAKD). N-linked (GlcNAc...) asparagine glycans are attached at residues N93 and N97. N-linked (GlcNAc...) asparagine glycans are attached at residues N143, N178, N186, and N203. N-linked (GlcNAc...) asparagine glycosylation occurs at N262. N-linked (GlcNAc...) asparagine glycans are attached at residues N429 and N445. N569 carries an N-linked (GlcNAc...) asparagine glycan. Residues 619–639 (WLLRSIFVLAAMVLLAGVAWF) traverse the membrane as a helical segment. Residues 640 to 996 (YFKYRTFKKA…EDTSDQGSIA (357 aa)) are Cytoplasmic-facing. The 287-residue stretch at 676–962 (LDEDNVIGAG…RRVVKMLQEI (287 aa)) folds into the Protein kinase domain. Residues 682–690 (IGAGASGKV) and K704 contribute to the ATP site. Phosphotyrosine is present on residues Y764 and Y802. D815 serves as the catalytic Proton acceptor. S851 carries the phosphoserine modification. Residues Y859 and Y866 each carry the phosphotyrosine modification. T867 carries the post-translational modification Phosphothreonine. The tract at residues 967-996 (EDSLHKIRDDKDGKLTPYYNEDTSDQGSIA) is disordered. Over residues 968-980 (DSLHKIRDDKDGK) the composition is skewed to basic and acidic residues.

This sequence belongs to the protein kinase superfamily. Ser/Thr protein kinase family.

It localises to the cell membrane. The catalysed reaction is L-seryl-[protein] + ATP = O-phospho-L-seryl-[protein] + ADP + H(+). The enzyme catalyses L-threonyl-[protein] + ATP = O-phospho-L-threonyl-[protein] + ADP + H(+). In Arabidopsis thaliana (Mouse-ear cress), this protein is Receptor-like protein kinase HSL1 (HSL1).